Here is a 366-residue protein sequence, read N- to C-terminus: Anhydro-N-acetylmuramic acid kinase (366 aa).

Residue 12–19 participates in ATP binding; it reads GTSMDGAD.

This sequence belongs to the anhydro-N-acetylmuramic acid kinase family.

The catalysed reaction is 1,6-anhydro-N-acetyl-beta-muramate + ATP + H2O = N-acetyl-D-muramate 6-phosphate + ADP + H(+). It participates in amino-sugar metabolism; 1,6-anhydro-N-acetylmuramate degradation. Its pathway is cell wall biogenesis; peptidoglycan recycling. Functionally, catalyzes the specific phosphorylation of 1,6-anhydro-N-acetylmuramic acid (anhMurNAc) with the simultaneous cleavage of the 1,6-anhydro ring, generating MurNAc-6-P. Is required for the utilization of anhMurNAc either imported from the medium or derived from its own cell wall murein, and thus plays a role in cell wall recycling. The sequence is that of Anhydro-N-acetylmuramic acid kinase from Neisseria meningitidis serogroup C (strain 053442).